The following is a 1910-amino-acid chain: MWVAKWLTGLLYHLSLFITRSWEVDFHPRQEALVRTLTSYEVVIPERVNEFGEVFPQSHHFSRQKRSSEALEPMPFRTHYRFTAYGQLFQLNLTADASFLAAGYTEVHLGTPERGAWESDAGPSDLRHCFYRGQVNSQEDYKAVVSLCGGLTGTFKGQNGEYFLEPIMKADGNEYEDGHNKPHLIYRQDLNNSFLQTLKYCSVSESQIKETSLPFHTYSNMNEDLNVMKERVLGHTSKNVPLKDERRHSRKKRLISYPRYIEIMVTADAKVVSAHGSNLQNYILTLMSIVATIYKDPSIGNLIHIVVVKLVMIHREEEGPVINFDGATTLKNFCSWQQTQNDLDDVHPSHHDTAVLITREDICSSKEKCNMLGLSYLGTICDPLQSCFINEEKGLISAFTIAHELGHTLGVQHDDNPRCKEMKVTKYHVMAPALSFHMSPWSWSNCSRKYVTEFLDTGYGECLLDKPDEEIYNLPSELPGSRYDGNKQCELAFGPGSQMCPHINICMHLWCTSTEKLHKGCFTQHVPPADGTDCGPGMHCRHGLCVNKETETRPVNGEWGPWEPYSSCSRTCGGGIESATRRCNRPEPRNGGNYCVGRRMKFRSCNTDSCPKGTQDFREKQCSDFNGKHLDISGIPSNVRWLPRYSGIGTKDRCKLYCQVAGTNYFYLLKDMVEDGTPCGTETHDICVQGQCMAAGCDHVLNSSAKIDKCGVCGGDNSSCKTITGVFNSSHYGYNVVVKIPAGATNVDIRQYSYSGQPDDSYLALSDAEGNFLFNGNFLLSTSKKEINVQGTRTVIEYSGSNNAVERINSTNRQEKEILIEVLCVGNLYNPDVHYSFNIPLEERSDMFTWDPYGPWEGCTKMCQGLQRRNITCIHKSDHSVVSDKECDHLPLPSFVTQSCNTDCELRWHVIGKSECSSQCGQGYRTLDIHCMKYSIHEGQTVQVDDHYCGDQLKPPTQELCHGNCVFTRWHYSEWSQCSRSCGGGERSRESYCMNNFGHRLADNECQELSRVTRENCNEFSCPSWAASEWSECLVTCGKGTKQRQVWCQLNVDHLSDGFCNSSTKPESLSPCELHTCASWQVGPWGPCTTTCGHGYQMRDVKCVNELASAVLEDTECHEASRPSDRQSCVLTPCSFISKLETALLPTVLIKKMAQWRHGSWTPCSVSCGRGTQARYVSCRDALDRIADESYCAHLPRPAEIWDCFTPCGEWQAGDWSPCSASCGHGKTTRQVLCMNYHQPIDENYCDPEVRPLMEQECSLAACPPAHSHFPSSPVQPSYYLSTNLPLTQKLEDNENQVVHPSVRGNQWRTGPWGSCSSSCSGGLQHRAVVCQDENGQSASYCDAASKPPELQQCGPGPCPQWNYGNWGECSQTCGGGIKSRLVICQFPNGQILEDHNCEIVNKPPSVIQCHMHACPADVSWHQEPWTSCSASCGKGRKYREVFCIDQFQRKLEDTNCSQVQKPPTHKACRSVRCPSWKANSWNECSVTCGSGVQQRDVYCRLKGVGQVVEEMCDQSTRPCSQRRCWSQDCVQHKGMERGRLNCSTSCERKDSHQRMECTDNQIRQVNEIVYNSSTISLTSKNCRNPPCNYIVVTADSSQCANNCGFSYRQRITYCTEIPSTKKHKLHRLRPIVYQECPVVPSSQVYQCINSCLHLATWKVGKWSKCSVTCGIGIMKRQVKCITKHGLSSDLCLNHLKPGAQKKCYANDCKSFTTCKEIQVKNHIRKDGDYYLNIKGRIIKIYCADMYLENPKEYLTLVQGEENFSEVYGFRLKNPYQCPFNGSRREDCECDNGHLAAGYTVFSKIRIDLTSMQIKTTDLLFSKTIFGNAVPFATAGDCYSAFRCPQGQFSINLSGTGMKISSTAKWLTQGSYTSVSIRRSEDGTRFFGKCGGYCGKCLPHMTTGLPIQVI.

An N-terminal signal peptide occupies residues 1 to 21 (MWVAKWLTGLLYHLSLFITRS). Residues 22–253 (WEVDFHPRQE…DERRHSRKKR (232 aa)) constitute a propeptide that is removed on maturation. Residues Asn92 and Asn191 are each glycosylated (N-linked (GlcNAc...) asparagine). The 209-residue stretch at 259–467 (RYIEIMVTAD…GYGECLLDKP (209 aa)) folds into the Peptidase M12B domain. Cystine bridges form between Cys334/Cys387, Cys363/Cys369, Cys381/Cys462, Cys419/Cys446, Cys489/Cys511, Cys500/Cys521, Cys506/Cys540, Cys534/Cys545, Cys568/Cys605, Cys572/Cys610, and Cys583/Cys595. His403 contributes to the Zn(2+) binding site. Residue Glu404 is part of the active site. Zn(2+)-binding residues include His407 and His413. Residue Asn445 is glycosylated (N-linked (GlcNAc...) asparagine). In terms of domain architecture, Disintegrin spans 468 to 555 (DEEIYNLPSE…VNKETETRPV (88 aa)). In terms of domain architecture, TSP type-1 1 spans 556–611 (NGEWGPWEPYSSCSRTCGGGIESATRRCNRPEPRNGGNYCVGRRMKFRSCNTDSCP). Residues Asn702, Asn717, Asn728, Asn809, and Asn870 are each glycosylated (N-linked (GlcNAc...) asparagine). The interval 724-846 (TGVFNSSHYG…FNIPLEERSD (123 aa)) is spacer. TSP type-1 domains lie at 846-904 (DMFT…NTDC), 905-961 (ELRW…QELC), 966-1023 (VFTR…FSCP), 1024-1073 (SWAA…SPCE), 1076-1135 (TCAS…TPCS), 1152-1206 (KMAQ…DCFT), 1207-1264 (PCGE…AACP), 1304-1356 (RGNQ…QCGP), 1358-1416 (PCPQ…HACP), 1417-1475 (ADVS…VRCP), 1476-1531 (SWKA…QDCV), 1535-1588 (GMER…NPPC), 1589-1652 (NYIV…INSC), and 1654-1710 (HLAT…NDCK). N-linked (GlcNAc...) asparagine glycosylation is present at Asn1061. A glycan (N-linked (GlcNAc...) asparagine) is linked at Asn1456. Residues Asn1542 and Asn1572 are each glycosylated (N-linked (GlcNAc...) asparagine). In terms of domain architecture, GON spans 1711 to 1910 (SFTTCKEIQV…MTTGLPIQVI (200 aa)). Residues Asn1763, Asn1781, and Asn1852 are each glycosylated (N-linked (GlcNAc...) asparagine).

Requires Zn(2+) as cofactor. Post-translationally, the precursor is cleaved by a furin endopeptidase. Glycosylated. Can be O-fucosylated by POFUT2 on a serine or a threonine residue found within the consensus sequence C1-X(2)-(S/T)-C2-G of the TSP type-1 repeat domains where C1 and C2 are the first and second cysteine residue of the repeat, respectively. Fucosylated repeats can then be further glycosylated by the addition of a beta-1,3-glucose residue by the glucosyltransferase, B3GALTL. Fucosylation mediates the efficient secretion of ADAMTS family members. Can also be C-glycosylated with one or two mannose molecules on tryptophan residues within the consensus sequence W-X-X-W of the TPRs, and N-glycosylated. These other glycosylations can also facilitate secretion. Very sparingly expressed, although is detected at low levels in testis, prostate, ovary, heart, placenta, lung and pancreas. Overexpressed in several brain, colon and breast carcinomas.

Its subcellular location is the secreted. The protein resides in the extracellular space. It is found in the extracellular matrix. Functionally, may play a role in tissue-remodeling process occurring in both normal and pathological conditions. May have a protease-independent function in the transport from the endoplasmic reticulum to the Golgi apparatus of secretory cargos, mediated by the GON domain. This chain is A disintegrin and metalloproteinase with thrombospondin motifs 20 (ADAMTS20), found in Homo sapiens (Human).